A 119-amino-acid polypeptide reads, in one-letter code: Large ribosomal subunit protein bL20 (119 aa).

This sequence belongs to the bacterial ribosomal protein bL20 family.

In terms of biological role, binds directly to 23S ribosomal RNA and is necessary for the in vitro assembly process of the 50S ribosomal subunit. It is not involved in the protein synthesizing functions of that subunit. The polypeptide is Large ribosomal subunit protein bL20 (Rhodopseudomonas palustris (strain HaA2)).